Here is a 286-residue protein sequence, read N- to C-terminus: 4-diphosphocytidyl-2-C-methyl-D-erythritol kinase (286 aa).

The active site involves Lys-8. Residue 92-102 (PVSAGLAGGST) participates in ATP binding. Residue Asp-134 is part of the active site.

Belongs to the GHMP kinase family. IspE subfamily.

It catalyses the reaction 4-CDP-2-C-methyl-D-erythritol + ATP = 4-CDP-2-C-methyl-D-erythritol 2-phosphate + ADP + H(+). The protein operates within isoprenoid biosynthesis; isopentenyl diphosphate biosynthesis via DXP pathway; isopentenyl diphosphate from 1-deoxy-D-xylulose 5-phosphate: step 3/6. Catalyzes the phosphorylation of the position 2 hydroxy group of 4-diphosphocytidyl-2C-methyl-D-erythritol. In Caldicellulosiruptor bescii (strain ATCC BAA-1888 / DSM 6725 / KCTC 15123 / Z-1320) (Anaerocellum thermophilum), this protein is 4-diphosphocytidyl-2-C-methyl-D-erythritol kinase.